The primary structure comprises 1021 residues: SWI/SNF-related matrix-associated actin-dependent regulator of chromatin subfamily A containing DEAD/H box 1 (1021 aa).

Residue Met-1 is modified to N-acetylmethionine. 2 disordered regions span residues 1–82 and 124–151; these read MNLF…SLSC and SEPS…EDLS. Over residues 7–19 the composition is skewed to basic and acidic residues; sequence DRFRFEKRSKIEE. Residues 22–39 are compositionally biased toward low complexity; the sequence is EAAPQPSQARPSSPISLS. Thr-54 is modified (phosphothreonine). Ser-57 carries the post-translational modification Phosphoserine. Lys-77 is covalently cross-linked (Glycyl lysine isopeptide (Lys-Gly) (interchain with G-Cter in SUMO2)). Ser-79, Ser-124, Ser-127, Ser-132, Ser-144, Ser-145, and Ser-151 each carry phosphoserine. Residues 156–198 form the CUE 1 domain; that stretch reads LKDAKLQTLKELFPQRSDSDLLKLIESTSTMDGAIAAALLMFG. The interval 201–246 is disordered; that stretch reads GGGPRKRKLSSSSEEDDVNDDQSVKQPRGDRGEESNESAEASSNWE. Phosphoserine occurs at positions 210, 213, 235, and 238. Positions 247–290 constitute a CUE 2 domain; it reads KQESIVLKLQKEFPNFDKQELREVLKEHEWMYTEALESLKVFAE. The residue at position 298 (Ser-298) is a Phosphoserine. The interval 329–366 is disordered; it reads VKPQNGFNKKRKKNVFNPKKAVEDSEYDSGSDAGSSLD. Residues Lys-330 and Lys-466 each participate in a glycyl lysine isopeptide (Lys-Gly) (interchain with G-Cter in SUMO2) cross-link. Positions 504 to 672 constitute a Helicase ATP-binding domain; sequence ALVHKHGLNG…MSLLNFVMPH (169 aa). 516-524 contributes to the ATP binding site; it reads ADEMGLGKT. Residues 623-626 carry the DEGH box motif; that stretch reads DEGH. A Nuclear localization signal motif is present at residues 716-733; it reads RRVKEEVLKLLPPKKDRI. Residue Lys-719 forms a Glycyl lysine isopeptide (Lys-Gly) (interchain with G-Cter in SUMO2) linkage. The Helicase C-terminal domain maps to 853 to 1005; it reads ALGCILSELK…MTTVDEADEG (153 aa). ATP is bound at residue 892–899; that stretch reads YLRLDGKT. Lys-991 is covalently cross-linked (Glycyl lysine isopeptide (Lys-Gly) (interchain with G-Cter in SUMO2)). Positions 1000-1003 match the DEAD box motif; that stretch reads DEAD.

This sequence belongs to the SNF2/RAD54 helicase family. Binds to DNA preferentially in the vicinity of transcriptional start sites. Interacts with MSH2 and TRIM28. Part of a complex composed of TRIM28, HDAC1, HDAC2 and EHMT2. Interacts with PCNA.

The protein localises to the nucleus. The protein resides in the chromosome. It catalyses the reaction ATP + H2O = ADP + phosphate + H(+). DNA helicase that possesses intrinsic ATP-dependent nucleosome-remodeling activity and is both required for DNA repair and heterochromatin organization. Promotes DNA end resection of double-strand breaks (DSBs) following DNA damage: probably acts by weakening histone DNA interactions in nucleosomes flanking DSBs. Required for the restoration of heterochromatin organization after replication. Acts at replication sites to facilitate the maintenance of heterochromatin by directing H3 and H4 histones deacetylation, H3 'Lys-9' trimethylation (H3K9me3) and restoration of silencing. The chain is SWI/SNF-related matrix-associated actin-dependent regulator of chromatin subfamily A containing DEAD/H box 1 (Smarcad1) from Mus musculus (Mouse).